Reading from the N-terminus, the 267-residue chain is Tryptophan synthase alpha chain (267 aa).

Active-site proton acceptor residues include E51 and D62.

This sequence belongs to the TrpA family. In terms of assembly, tetramer of two alpha and two beta chains.

The enzyme catalyses (1S,2R)-1-C-(indol-3-yl)glycerol 3-phosphate + L-serine = D-glyceraldehyde 3-phosphate + L-tryptophan + H2O. It functions in the pathway amino-acid biosynthesis; L-tryptophan biosynthesis; L-tryptophan from chorismate: step 5/5. The alpha subunit is responsible for the aldol cleavage of indoleglycerol phosphate to indole and glyceraldehyde 3-phosphate. This Prochlorococcus marinus (strain SARG / CCMP1375 / SS120) protein is Tryptophan synthase alpha chain.